The following is a 231-amino-acid chain: MAKLTKRMRAIREKIEAGKLYPANEAFALLKEISSVKFAESVDVSVNLGVDPRKSDQVVRGSTVLPNGTGKTVRVAVFTQGANAEAAKAAGADIVGMDDLAAEVKKGNMDFDVVIATPDAMRVVGQLGQILGPRGLMPNPKVGTVTTDVATAVKNAKGGQVRYRTDKAGIIHCSIGKVGFEPDALKENLNALLADLQKAKPSAAKGVYMKKVTVSTTMGPGIAVDQASLSA.

The protein belongs to the universal ribosomal protein uL1 family. As to quaternary structure, part of the 50S ribosomal subunit.

In terms of biological role, binds directly to 23S rRNA. The L1 stalk is quite mobile in the ribosome, and is involved in E site tRNA release. Functionally, protein L1 is also a translational repressor protein, it controls the translation of the L11 operon by binding to its mRNA. This Thioalkalivibrio sulfidiphilus (strain HL-EbGR7) protein is Large ribosomal subunit protein uL1.